The sequence spans 291 residues: Acetyl-coenzyme A carboxylase carboxyl transferase subunit beta (291 aa).

The 269-residue stretch at Val-23 to Ser-291 folds into the CoA carboxyltransferase N-terminal domain.

This sequence belongs to the AccD/PCCB family. As to quaternary structure, acetyl-CoA carboxylase is a heterohexamer composed of biotin carboxyl carrier protein (AccB), biotin carboxylase (AccC) and two subunits each of ACCase subunit alpha (AccA) and ACCase subunit beta (AccD).

It is found in the cytoplasm. It catalyses the reaction N(6)-carboxybiotinyl-L-lysyl-[protein] + acetyl-CoA = N(6)-biotinyl-L-lysyl-[protein] + malonyl-CoA. Its pathway is lipid metabolism; malonyl-CoA biosynthesis; malonyl-CoA from acetyl-CoA: step 1/1. In terms of biological role, component of the acetyl coenzyme A carboxylase (ACC) complex. Biotin carboxylase (BC) catalyzes the carboxylation of biotin on its carrier protein (BCCP) and then the CO(2) group is transferred by the transcarboxylase to acetyl-CoA to form malonyl-CoA. This chain is Acetyl-coenzyme A carboxylase carboxyl transferase subunit beta, found in Opitutus terrae (strain DSM 11246 / JCM 15787 / PB90-1).